A 306-amino-acid chain; its full sequence is D-alanine--D-alanine ligase B (306 aa).

Residues glutamate 15 and serine 150 contribute to the active site. The 203-residue stretch at 101-303 (KLLWQGAGLP…FSQLVVRILE (203 aa)) folds into the ATP-grasp domain. Position 134 to 189 (134 to 189 (ISALGLPVIVKPSREGSSVGMSKVVAENALQDALRLAFQHDEEVLIEKWLSGPEFT)) interacts with ATP. The Mg(2+) site is built by aspartate 257, glutamate 270, and asparagine 272. Residue serine 281 is part of the active site.

The protein belongs to the D-alanine--D-alanine ligase family. As to quaternary structure, monomer. Mg(2+) serves as cofactor. Requires Mn(2+) as cofactor.

The protein localises to the cytoplasm. The enzyme catalyses 2 D-alanine + ATP = D-alanyl-D-alanine + ADP + phosphate + H(+). It functions in the pathway cell wall biogenesis; peptidoglycan biosynthesis. In terms of biological role, cell wall formation. The polypeptide is D-alanine--D-alanine ligase B (ddlB) (Escherichia coli (strain K12)).